We begin with the raw amino-acid sequence, 245 residues long: Orotidine 5'-phosphate decarboxylase (245 aa).

Substrate contacts are provided by residues aspartate 22, lysine 44, 71–80 (DLKFHDIPNT), threonine 131, arginine 192, glutamine 201, glycine 221, and arginine 222. The active-site Proton donor is lysine 73.

The protein belongs to the OMP decarboxylase family. Type 1 subfamily. Homodimer.

The catalysed reaction is orotidine 5'-phosphate + H(+) = UMP + CO2. It functions in the pathway pyrimidine metabolism; UMP biosynthesis via de novo pathway; UMP from orotate: step 2/2. Catalyzes the decarboxylation of orotidine 5'-monophosphate (OMP) to uridine 5'-monophosphate (UMP). In Yersinia pestis bv. Antiqua (strain Antiqua), this protein is Orotidine 5'-phosphate decarboxylase.